Reading from the N-terminus, the 316-residue chain is Olfactory receptor 10H28 (316 aa).

The Extracellular segment spans residues 1-26; sequence MPGQNYSTISEFILFGFSAFPHQMLP. An N-linked (GlcNAc...) asparagine glycan is attached at Asn5. The helical transmembrane segment at 27 to 47 threads the bilayer; sequence ALFLLYLLMYLFTLLGNLVIM. Residues 48–57 are Cytoplasmic-facing; it reads AAIWTEHRLH. A helical transmembrane segment spans residues 58–78; it reads TPMYLFLCALSISEILFTVVI. At 79–100 the chain is on the extracellular side; it reads TPRMLSDMLSTHRSITFIACAN. A disulfide bridge connects residues Cys98 and Cys190. Residues 101–121 traverse the membrane as a helical segment; sequence QLFFSFTFGYTHSFLLVVMGY. The Cytoplasmic segment spans residues 122 to 144; sequence DRYVAICRPLHYHALMSLQGCAR. A helical transmembrane segment spans residues 145-165; it reads LVAWSWAGGSLIGMALTIIIF. Residues 166 to 207 lie on the Extracellular side of the membrane; that stretch reads HLTFCESNVIHHILCHVFSLLKLACGERTAFVTIAVILVCVT. Residues 208 to 228 form a helical membrane-spanning segment; the sequence is PLIGCLVFIILSYIFIVAAIL. Topologically, residues 229-241 are cytoplasmic; the sequence is RIPSTEGRHKTFS. A helical membrane pass occupies residues 242–262; sequence TCASHLTVVIVHYGFASIIYL. The Extracellular segment spans residues 263–273; the sequence is KSRGLYSQYTD. The helical transmembrane segment at 274-294 threads the bilayer; that stretch reads TLMSTTYTVFTPFLSPIIFSL. The Cytoplasmic portion of the chain corresponds to 295–316; it reads RNKELKNAIIKSFHRNVCQQSI.

Belongs to the G-protein coupled receptor 1 family.

The protein resides in the cell membrane. Odorant receptor. The sequence is that of Olfactory receptor 10H28 from Mus musculus (Mouse).